The chain runs to 118 residues: Large ribosomal subunit protein uL18 (118 aa).

It belongs to the universal ribosomal protein uL18 family. Part of the 50S ribosomal subunit; part of the 5S rRNA/L5/L18/L25 subcomplex. Contacts the 5S and 23S rRNAs.

In terms of biological role, this is one of the proteins that bind and probably mediate the attachment of the 5S RNA into the large ribosomal subunit, where it forms part of the central protuberance. This chain is Large ribosomal subunit protein uL18, found in Acidobacterium capsulatum (strain ATCC 51196 / DSM 11244 / BCRC 80197 / JCM 7670 / NBRC 15755 / NCIMB 13165 / 161).